The following is a 359-amino-acid chain: DNA polymerase IV (359 aa).

Positions 4 to 185 (IIHIDMDCYF…LSLRKIPGVG (182 aa)) constitute a UmuC domain. D8 and D103 together coordinate Mg(2+). The active site involves E104.

The protein belongs to the DNA polymerase type-Y family. Monomer. It depends on Mg(2+) as a cofactor.

The protein resides in the cytoplasm. It catalyses the reaction DNA(n) + a 2'-deoxyribonucleoside 5'-triphosphate = DNA(n+1) + diphosphate. In terms of biological role, poorly processive, error-prone DNA polymerase involved in untargeted mutagenesis. Copies undamaged DNA at stalled replication forks, which arise in vivo from mismatched or misaligned primer ends. These misaligned primers can be extended by PolIV. Exhibits no 3'-5' exonuclease (proofreading) activity. May be involved in translesional synthesis, in conjunction with the beta clamp from PolIII. The sequence is that of DNA polymerase IV from Shewanella sp. (strain MR-7).